A 196-amino-acid chain; its full sequence is Thymidine kinase (196 aa).

Position 17-24 (17-24) interacts with ATP; it reads GPMFAGKT. Residue glutamate 92 is the Proton acceptor of the active site. Substrate is bound at residue phenylalanine 121. Zn(2+)-binding residues include cysteine 146 and cysteine 149. 166-170 contributes to the substrate binding site; that stretch reads LILAG. Zn(2+) is bound by residues cysteine 179 and cysteine 182.

This sequence belongs to the thymidine kinase family.

The catalysed reaction is thymidine + ATP = dTMP + ADP + H(+). Phosphorylates thymidine. ASFV replicates in the cytoplasm of infected cells and contains genes encoding a number of enzymes needed for DNA synthesis, including thymidine kinase. Important for growth in swine macrophages in vitro and is a virus virulence factor in swine. This is Thymidine kinase from Ornithodoros (relapsing fever ticks).